We begin with the raw amino-acid sequence, 203 residues long: ATP-dependent Clp protease proteolytic subunit (203 aa).

The active-site Nucleophile is Ser-101. Residue His-126 is part of the active site.

The protein belongs to the peptidase S14 family. Component of the chloroplastic Clp protease core complex.

The protein resides in the plastid. Its subcellular location is the chloroplast stroma. It carries out the reaction Hydrolysis of proteins to small peptides in the presence of ATP and magnesium. alpha-casein is the usual test substrate. In the absence of ATP, only oligopeptides shorter than five residues are hydrolyzed (such as succinyl-Leu-Tyr-|-NHMec, and Leu-Tyr-Leu-|-Tyr-Trp, in which cleavage of the -Tyr-|-Leu- and -Tyr-|-Trp bonds also occurs).. Cleaves peptides in various proteins in a process that requires ATP hydrolysis. Has a chymotrypsin-like activity. Plays a major role in the degradation of misfolded proteins. This Marchantia polymorpha (Common liverwort) protein is ATP-dependent Clp protease proteolytic subunit.